Here is a 244-residue protein sequence, read N- to C-terminus: Ubiquitin carboxyl-terminal hydrolase mug105 (244 aa).

The active-site Nucleophile is C42. The Proton acceptor role is filled by H165. The active site involves D183.

Belongs to the peptidase C78 family. ZUFSP subfamily.

It localises to the cytoplasm. The enzyme catalyses Thiol-dependent hydrolysis of ester, thioester, amide, peptide and isopeptide bonds formed by the C-terminal Gly of ubiquitin (a 76-residue protein attached to proteins as an intracellular targeting signal).. In terms of biological role, deubiquitinase with endodeubiquitinase activity that preferentially cleaves 'Lys-48'-linked polyubiquitin chains. Shows only weak activity against 'Lys-63' and 'Lys-11'-linked chains. Has a role in meiosis. This chain is Ubiquitin carboxyl-terminal hydrolase mug105 (mug105), found in Schizosaccharomyces pombe (strain 972 / ATCC 24843) (Fission yeast).